The primary structure comprises 491 residues: DEAD-box ATP-dependent RNA helicase 36 (491 aa).

Acidic residues predominate over residues 1–10; that stretch reads MEEPTPEEEG. The interval 1-56 is disordered; the sequence is MEEPTPEEEGGITIMSKSRKNPKTVVNIQSQKLDSDQNTPQFEKFTNPNPSSDTTS. Polar residues predominate over residues 24–56; the sequence is TVVNIQSQKLDSDQNTPQFEKFTNPNPSSDTTS. The short motif at 58-86 is the Q motif element; that stretch reads TNFEGLGLAEWAVETCKELGMRKPTPVQT. A Helicase ATP-binding domain is found at 89-262; the sequence is VPKILAGRDV…EHSSNKAYFY (174 aa). ATP is bound at residue 102 to 109; the sequence is AQTGSGKT. The short motif at 210 to 213 is the DEAD box element; the sequence is DEAD. One can recognise a Helicase C-terminal domain in the interval 289–438; that stretch reads YLVHILSQME…NKKVITDSLE (150 aa). The disordered stretch occupies residues 471 to 491; it reads KTLADKGLLKKRGKRQKSTEN. Positions 479-491 are enriched in basic residues; it reads LKKRGKRQKSTEN.

This sequence belongs to the DEAD box helicase family. DDX49/DBP8 subfamily.

The enzyme catalyses ATP + H2O = ADP + phosphate + H(+). This chain is DEAD-box ATP-dependent RNA helicase 36 (RH36), found in Arabidopsis thaliana (Mouse-ear cress).